Here is a 257-residue protein sequence, read N- to C-terminus: Homeobox protein goosecoid (257 aa).

The segment at residues 160 to 219 (KRRHRTIFTDEQLEALENLFQETKYPDVGTREQLARKVHLREEKVEVWFKNRRAKWRRQK) is a DNA-binding region (homeobox). Residues 213–257 (AKWRRQKRSSSEESENAEKWNKTSSSKASPEKREEEGKSDLDSDS) form a disordered region. Positions 241–257 (SPEKREEEGKSDLDSDS) are enriched in basic and acidic residues.

It belongs to the paired homeobox family. Bicoid subfamily.

It localises to the nucleus. Regulates chordin (CHRD). May play a role in spatial programing within discrete embryonic fields or lineage compartments during organogenesis. In concert with NKX3-2, plays a role in defining the structural components of the middle ear; required for the development of the entire tympanic ring. Probably involved in the regulatory networks that define neural crest cell fate specification and determine mesoderm cell lineages in mammals. The chain is Homeobox protein goosecoid (GSC) from Gorilla gorilla gorilla (Western lowland gorilla).